A 448-amino-acid chain; its full sequence is Trigger factor (448 aa).

A PPIase FKBP-type domain is found at 172-257 (GDRVTVDFVG…MKKIEWPHLP (86 aa)).

The protein belongs to the FKBP-type PPIase family. Tig subfamily.

It localises to the cytoplasm. The enzyme catalyses [protein]-peptidylproline (omega=180) = [protein]-peptidylproline (omega=0). In terms of biological role, involved in protein export. Acts as a chaperone by maintaining the newly synthesized protein in an open conformation. Functions as a peptidyl-prolyl cis-trans isomerase. This Burkholderia lata (strain ATCC 17760 / DSM 23089 / LMG 22485 / NCIMB 9086 / R18194 / 383) protein is Trigger factor.